A 166-amino-acid chain; its full sequence is Kelch repeat protein B10 (166 aa).

Kelch repeat units lie at residues 25–76 (TIFV…STFG) and 77–129 (MLYF…KLNN).

Belongs to the poxviruses Kelch family.

The chain is Kelch repeat protein B10 from Oryctolagus cuniculus (Rabbit).